Reading from the N-terminus, the 101-residue chain is Peroxisomal biogenesis factor 39 (101 aa).

The protein localises to the peroxisome. Its function is as follows. May be a peroxin involved in the PTS2-mediated protein import pathway. This Homo sapiens (Human) protein is Peroxisomal biogenesis factor 39.